The chain runs to 172 residues: Shikimate kinase (172 aa).

11 to 16 (GAGKST) is an ATP binding site. Position 15 (S15) interacts with Mg(2+). D33, R57, and G79 together coordinate substrate. R117 lines the ATP pocket. Residue R136 coordinates substrate. R153 provides a ligand contact to ATP.

It belongs to the shikimate kinase family. Monomer. Mg(2+) serves as cofactor.

It is found in the cytoplasm. The catalysed reaction is shikimate + ATP = 3-phosphoshikimate + ADP + H(+). Its pathway is metabolic intermediate biosynthesis; chorismate biosynthesis; chorismate from D-erythrose 4-phosphate and phosphoenolpyruvate: step 5/7. Catalyzes the specific phosphorylation of the 3-hydroxyl group of shikimic acid using ATP as a cosubstrate. The polypeptide is Shikimate kinase (Pseudomonas paraeruginosa (strain DSM 24068 / PA7) (Pseudomonas aeruginosa (strain PA7))).